A 123-amino-acid chain; its full sequence is Small ribosomal subunit protein uS12 (123 aa).

Positions 1-29 are disordered; the sequence is MPTINQLVRKGRVPQKAKSKVPAMEQNPQ. Residues 9 to 19 show a composition bias toward basic residues; that stretch reads RKGRVPQKAKS. Asp89 is subject to 3-methylthioaspartic acid.

The protein belongs to the universal ribosomal protein uS12 family. In terms of assembly, part of the 30S ribosomal subunit. Contacts proteins S8 and S17. May interact with IF1 in the 30S initiation complex.

Its function is as follows. With S4 and S5 plays an important role in translational accuracy. Interacts with and stabilizes bases of the 16S rRNA that are involved in tRNA selection in the A site and with the mRNA backbone. Located at the interface of the 30S and 50S subunits, it traverses the body of the 30S subunit contacting proteins on the other side and probably holding the rRNA structure together. The combined cluster of proteins S8, S12 and S17 appears to hold together the shoulder and platform of the 30S subunit. The chain is Small ribosomal subunit protein uS12 from Erythrobacter litoralis (strain HTCC2594).